The following is a 271-amino-acid chain: L-aspartate dehydrogenase (271 aa).

2 residues coordinate NAD(+): Ala124 and Asn192. His222 is an active-site residue.

This sequence belongs to the L-aspartate dehydrogenase family.

The enzyme catalyses L-aspartate + NADP(+) + H2O = oxaloacetate + NH4(+) + NADPH + H(+). It carries out the reaction L-aspartate + NAD(+) + H2O = oxaloacetate + NH4(+) + NADH + H(+). It participates in cofactor biosynthesis; NAD(+) biosynthesis; iminoaspartate from L-aspartate (dehydrogenase route): step 1/1. Its function is as follows. Specifically catalyzes the NAD or NADP-dependent dehydrogenation of L-aspartate to iminoaspartate. This Methanosarcina acetivorans (strain ATCC 35395 / DSM 2834 / JCM 12185 / C2A) protein is L-aspartate dehydrogenase.